The following is a 179-amino-acid chain: Natural killer cells antigen CD94 (179 aa).

The Cytoplasmic segment spans residues 1–10 (MAVSRITRWR). Residues 11–31 (LMSVIFGIKCLFLMVTLGVLL) form a helical; Signal-anchor for type II membrane protein membrane-spanning segment. Residues 32–179 (INSFTIQNIQ…NRYICKKLPI (148 aa)) are Extracellular-facing. Disulfide bonds link C58-C70, C61-C72, C89-C174, and C152-C166. A C-type lectin domain is found at 68–175 (HQCNCYFISK…CENKNRYICK (108 aa)). N-linked (GlcNAc...) asparagine glycans are attached at residues N93 and N109.

Can form disulfide-bonded heterodimer with NKG2 family members KLRC1 and KLRC2. KLRD1-KLRC1 heterodimer interacts with peptide-bound MHC-E-B2M heterotrimeric complex. KLRD1 plays a prominent role in directly interacting with MHC-E. KLRD1-KLRC1 interacts with much higher affinity with peptide-bound MHC-E-B2M than KLRD1-KLRC2. Interacts with the adapter protein TYROBP/DAP12; this interaction is required for cell surface expression and cell activation.

The protein resides in the cell membrane. In terms of biological role, immune receptor involved in self-nonself discrimination. In complex with KLRC1 or KLRC2 on cytotoxic and regulatory lymphocyte subsets, recognizes non-classical major histocompatibility (MHC) class Ib molecule MHC-E loaded with self-peptides derived from the signal sequence of classical MHC class Ia and non-classical MHC class Ib molecules. Enables cytotoxic cells to monitor the expression of MHC class I molecules in healthy cells and to tolerate self. Primarily functions as a ligand binding subunit as it lacks the capacity to signal. KLRD1-KLRC1 acts as an immune inhibitory receptor. Key inhibitory receptor on natural killer (NK) cells that regulates their activation and effector functions. Dominantly counteracts T cell receptor signaling on a subset of memory/effector CD8-positive T cells as part of an antigen-driven response to avoid autoimmunity. On intraepithelial CD8-positive gamma-delta regulatory T cells triggers TGFB1 secretion, which in turn limits the cytotoxic programming of intraepithelial CD8-positive alpha-beta T cells, distinguishing harmless from pathogenic antigens. In MHC-E-rich tumor microenvironment, acts as an immune inhibitory checkpoint and may contribute to progressive loss of effector functions of NK cells and tumor-specific T cells, a state known as cell exhaustion. Upon MHC-E-peptide binding, transmits intracellular signals through KLRC1 immunoreceptor tyrosine-based inhibition motifs (ITIMs) by recruiting INPP5D/SHIP-1 and INPPL1/SHIP-2 tyrosine phosphatases to ITIMs, and ultimately opposing signals transmitted by activating receptors through dephosphorylation of proximal signaling molecules. Functionally, KLRD1-KLRC2 acts as an immune activating receptor. On cytotoxic lymphocyte subsets recognizes MHC-E loaded with signal sequence-derived peptides from non-classical MHC class Ib MHC-G molecules, likely playing a role in the generation and effector functions of adaptive NK cells and in maternal-fetal tolerance during pregnancy. Regulates the effector functions of terminally differentiated cytotoxic lymphocyte subsets, and in particular may play a role in adaptive NK cell response to viral infection. Upon MHC-E-peptide binding, transmits intracellular signals via the adapter protein TYROBP/DAP12, triggering the phosphorylation of proximal signaling molecules and cell activation. In Mus musculus (Mouse), this protein is Natural killer cells antigen CD94 (Klrd1).